The primary structure comprises 174 residues: UPF0200 protein PAE1629 (174 aa).

ATP is bound at residue 9–16 (GLPGSGKT).

This sequence belongs to the UPF0200 family.

The polypeptide is UPF0200 protein PAE1629 (Pyrobaculum aerophilum (strain ATCC 51768 / DSM 7523 / JCM 9630 / CIP 104966 / NBRC 100827 / IM2)).